Reading from the N-terminus, the 638-residue chain is Threonine--tRNA ligase (638 aa).

Positions 1–61 (MPIITLPDGT…DYDAEIKIIT (61 aa)) constitute a TGS domain. The interval 242 to 533 (DHRKIGKKMD…LIENYAGNFP (292 aa)) is catalytic. Residues cysteine 333, histidine 384, and histidine 510 each coordinate Zn(2+).

The protein belongs to the class-II aminoacyl-tRNA synthetase family. Homodimer. It depends on Zn(2+) as a cofactor.

The protein localises to the cytoplasm. The enzyme catalyses tRNA(Thr) + L-threonine + ATP = L-threonyl-tRNA(Thr) + AMP + diphosphate + H(+). Functionally, catalyzes the attachment of threonine to tRNA(Thr) in a two-step reaction: L-threonine is first activated by ATP to form Thr-AMP and then transferred to the acceptor end of tRNA(Thr). Also edits incorrectly charged L-seryl-tRNA(Thr). The protein is Threonine--tRNA ligase of Prochlorococcus marinus (strain MIT 9211).